The sequence spans 207 residues: Abscisic acid receptor PYL9 (207 aa).

The tract at residues 31-197 (FPPSTTTATT…NLQMLAAVAE (167 aa)) is START-like. Residues lysine 74, 104–109 (ASTSTE), 131–137 (RLRNYRS), and glutamate 162 each bind abscisate. A Gate loop motif is present at residues 100–104 (SGLPA). The Latch loop motif lies at 130–132 (HRL).

The protein belongs to the PYR/PYL/RCAR abscisic acid intracellular receptor family. In terms of assembly, homodimer. Interacts with PP2C06. Interacts with PP2C50. Binding to PP2C50 is dependent on the presence of abscisic acid (ABA). Interacts with PP2C30 and PP2C53. Binding to PP2C30 and PP2C53 is dependent on the presence of ABA.

The protein resides in the cytoplasm. It is found in the cytosol. It localises to the nucleus. Functionally, involved in abscisic acid (ABA) signaling during seed germination and abiotic stress response. Acts as a positive regulator of ABA-mediated inhibition of seed germination, and tolerance to drought and cold stresses. Inhibits the activity of the protein phosphatases PP2C06 and PP2C09 when activated by abscisic acid (ABA). The polypeptide is Abscisic acid receptor PYL9 (Oryza sativa subsp. japonica (Rice)).